Reading from the N-terminus, the 138-residue chain is Cysteine desulfuration protein SufE (138 aa).

The Cysteine persulfide intermediate role is filled by C51.

This sequence belongs to the SufE family. Homodimer. Interacts with SufS.

Its subcellular location is the cytoplasm. Its pathway is cofactor biosynthesis; iron-sulfur cluster biosynthesis. Functionally, participates in cysteine desulfuration mediated by SufS. Cysteine desulfuration mobilizes sulfur from L-cysteine to yield L-alanine and constitutes an essential step in sulfur metabolism for biosynthesis of a variety of sulfur-containing biomolecules. Functions as a sulfur acceptor for SufS, by mediating the direct transfer of the sulfur atom from the S-sulfanylcysteine of SufS, an intermediate product of cysteine desulfuration process. The polypeptide is Cysteine desulfuration protein SufE (Pectobacterium atrosepticum (strain SCRI 1043 / ATCC BAA-672) (Erwinia carotovora subsp. atroseptica)).